The following is a 294-amino-acid chain: MPSLKDLKNRIASVKATQKITKAMKMVAAAKLRRAQEAAEAARPYSQRMGAVLANITAAVSDADGAPLLMTGTGKSDVHLLVVCTAERGLCGGFNSQIARFARDHVRKLLAEGKTVKIFTVGKKGYDILRREYASLIIERKELRDVKRVGFENADALGKRIIEMFEAGEFDVCTLFYSEFKSVISQVPTGLQLIPASAPAVVEEDAAHKGAVYEYEPDAASILADLIPRNISVQIFRALLENVAGEMGSKMSAMDNATRNAGEMINKLTLSYNRQRQAQITKELIEIISGAEAL.

This sequence belongs to the ATPase gamma chain family. As to quaternary structure, F-type ATPases have 2 components, CF(1) - the catalytic core - and CF(0) - the membrane proton channel. CF(1) has five subunits: alpha(3), beta(3), gamma(1), delta(1), epsilon(1). CF(0) has three main subunits: a, b and c.

It is found in the cell inner membrane. Produces ATP from ADP in the presence of a proton gradient across the membrane. The gamma chain is believed to be important in regulating ATPase activity and the flow of protons through the CF(0) complex. In Rhizobium rhizogenes (strain K84 / ATCC BAA-868) (Agrobacterium radiobacter), this protein is ATP synthase gamma chain.